Consider the following 531-residue polypeptide: Doublesex- and mab-3-related transcription factor A2 (531 aa).

Positions 69 to 116 (CARCRNHGVVSALKGHKRYCRWKDCLCAKCTLIAERQRVMAAQVALRR) form a DNA-binding region, DM. The tract at residues 197–312 (LQAGRPDSPQ…GGPGPRQRTP (116 aa)) is disordered. The span at 274 to 285 (PGSSSPLGSESG) shows a compositional bias: low complexity. Residues 310 to 345 (RTPLDILTRVFPGHRRGVLELVLQGCGGDVVQAIEQ) enclose the DMA domain.

This sequence belongs to the DMRT family. Expressed in adult brain and testis, as well as in embryonic ovary, kidney, heart, lung, stomach and brain.

The protein resides in the nucleus. May be involved in sexual development. In Mus musculus (Mouse), this protein is Doublesex- and mab-3-related transcription factor A2 (Dmrta2).